The following is a 371-amino-acid chain: Meiotic drive suppressor wtf18 (371 aa).

Helical transmembrane passes span 86–106 (FLLRLLISVLAVSVVFFTAWV), 120–140 (AFSVTIGITCPILFIATFCFF), 153–173 (VTVIFLAQCVKVTVIFLAQCV), 197–217 (DLVVTIWLAWVVICFILFGCV), 233–253 (CSISAALFFILLLVCIPIWTL), 257–277 (LFGLFQVLGVQSCVVIVTKGL), 287–307 (ATGYEIEASSLFVIGNFLFFY), and 321–341 (FIGNGIASFLGGLGNAFGGIG).

This sequence belongs to the WTF family. Homomer. Interacts with other proteins that exhibit high sequence similarity.

It localises to the spore membrane. The protein resides in the vacuole membrane. Acts as a suppressor component of the dual wtf meiotic drive system, and can suppress but not confer meiotic drive by compatible poisons. Wtf meiotic drive systems promote unequal transmission of alleles from the parental zygote to progeny spores by encoding a poison and an antidote from the same locus; the poison is trans-acting and forms toxic aggregates in all spores within an ascus, wherease the antidote is spore-specific and targets aggregates for degradation by the vacuole. Meiotic drive by wtf systems therefore lead to poisoning of all progeny that do not inherit the dual poison/antidote allele, or express a compatible antidote. This chain is Meiotic drive suppressor wtf18, found in Schizosaccharomyces kambucha (Fission yeast).